The sequence spans 201 residues: dTTP/UTP pyrophosphatase (201 aa).

Asp80 serves as the catalytic Proton acceptor.

The protein belongs to the Maf family. YhdE subfamily. It depends on a divalent metal cation as a cofactor.

It is found in the cytoplasm. The enzyme catalyses dTTP + H2O = dTMP + diphosphate + H(+). It catalyses the reaction UTP + H2O = UMP + diphosphate + H(+). Functionally, nucleoside triphosphate pyrophosphatase that hydrolyzes dTTP and UTP. May have a dual role in cell division arrest and in preventing the incorporation of modified nucleotides into cellular nucleic acids. The protein is dTTP/UTP pyrophosphatase of Novosphingobium aromaticivorans (strain ATCC 700278 / DSM 12444 / CCUG 56034 / CIP 105152 / NBRC 16084 / F199).